Consider the following 1056-residue polypeptide: Isoleucine--tRNA ligase (1056 aa).

Residues 1 to 13 (MCDQGEVSSQNSS) are compositionally biased toward polar residues. Residues 1-26 (MCDQGEVSSQNSSDYKEQRPTPRPNL) are disordered. Residues 63-73 (PFANGLPHFGH) carry the 'HIGH' region motif. A 'KMSKS' region motif is present at residues 632 to 636 (KASKS). Residue lysine 635 participates in ATP binding.

It belongs to the class-I aminoacyl-tRNA synthetase family. IleS type 2 subfamily. In terms of assembly, monomer. It depends on Zn(2+) as a cofactor.

The protein resides in the cytoplasm. It carries out the reaction tRNA(Ile) + L-isoleucine + ATP = L-isoleucyl-tRNA(Ile) + AMP + diphosphate. Functionally, catalyzes the attachment of isoleucine to tRNA(Ile). As IleRS can inadvertently accommodate and process structurally similar amino acids such as valine, to avoid such errors it has two additional distinct tRNA(Ile)-dependent editing activities. One activity is designated as 'pretransfer' editing and involves the hydrolysis of activated Val-AMP. The other activity is designated 'posttransfer' editing and involves deacylation of mischarged Val-tRNA(Ile). In Tropheryma whipplei (strain TW08/27) (Whipple's bacillus), this protein is Isoleucine--tRNA ligase.